We begin with the raw amino-acid sequence, 374 residues long: Ribosomal RNA large subunit methyltransferase G (374 aa).

The protein belongs to the methyltransferase superfamily. RlmG family.

Its subcellular location is the cytoplasm. The enzyme catalyses guanosine(1835) in 23S rRNA + S-adenosyl-L-methionine = N(2)-methylguanosine(1835) in 23S rRNA + S-adenosyl-L-homocysteine + H(+). In terms of biological role, specifically methylates the guanine in position 1835 (m2G1835) of 23S rRNA. In Pseudomonas syringae pv. tomato (strain ATCC BAA-871 / DC3000), this protein is Ribosomal RNA large subunit methyltransferase G.